Consider the following 233-residue polypeptide: RNA/RNP complex-1-interacting phosphatase homolog (233 aa).

A compositionally biased stretch (basic residues) spans 1–14 (MSNYHHNHNYQHRP). The interval 1–21 (MSNYHHNHNYQHRPRGYERLP) is disordered. One can recognise a Tyrosine-protein phosphatase domain in the interval 34-206 (NVGRDIDGTR…LYEAERKKKY (173 aa)). Catalysis depends on cysteine 150, which acts as the Phosphocysteine intermediate. 151 to 156 (THGLNR) is a substrate binding site. Arginine 156 functions as the Proton donor/acceptor in the catalytic mechanism. Residues 204–233 (KKYGKSSGKSSGNSADSTISSEQLHRNNSQ) form a disordered region. Positions 208–217 (KSSGKSSGNS) are enriched in low complexity. Polar residues predominate over residues 218–233 (ADSTISSEQLHRNNSQ).

This sequence belongs to the protein-tyrosine phosphatase family. Non-receptor class dual specificity subfamily. In terms of assembly, interacts with the ERI/DICER complex component dcr-1. Interacts with ERI/DICER complex components rrf-3 and isoform b of eri-1. Interacts with drh-3 and rde-8.

It localises to the cytoplasm. Its subcellular location is the nucleus. Functionally, RNA polyphosphatase which has RNA 5'-triphosphatase and diphosphatase activities. Displays poor protein-tyrosine phosphatase activity. Binds to 5'-triphosphorylated RNAs (also called ppp-RNAs). Dephosphorylates ppp-RNAs converting them to 5'-monophosphorylated RNAs (also called p-RNAs). During small-RNA-mediated gene-silencing or RNA interference (RNAi), involved in the dcr-1-mediated processing of an amplified dsRNA intermediate. This is most likely in association with several components of the ERI/DICER complex including dcr-1, eri-1 and rrf-3. Plays a role in the biogenesis of 26G small interfering RNAs (26G-siRNAs), which are a class of 26 nucleotide siRNAs that possess a guanine residue at the 5'-end, by dephosphorylating 5'-triphosphorylated 26G-siRNAs prior to their maturation by the ERI/DICER complex. Plays a role in the biogenesis of csr-1-bound 22G small interfering RNAs (22G-siRNAs), which are a class of 22 nucleotide siRNAs that possess a guanine residue at the 5'-end. Not required for the biogenesis of microRNAs (miRNA) or for the biogenesis of a class of 21 nucleotide PIWI-interacting RNAs (piRNAs) that possess a uracil residue at the 5'-end (also called 21U-RNAs). In Caenorhabditis elegans, this protein is RNA/RNP complex-1-interacting phosphatase homolog.